The chain runs to 141 residues: Zinc finger HIT domain-containing protein 3 (141 aa).

Residues 1–28 (LEKPKYRCPACRVPYCSVACFRKHKEQC) form an HIT-type; degenerate zinc finger. Cysteine 8, cysteine 11, histidine 24, and cysteine 28 together coordinate Zn(2+). Serine 66 carries the phosphoserine modification.

In terms of assembly, thyroid receptor interacting proteins (TRIPs) specifically interact with the ligand binding domain of the thyroid receptor (TR). Requires the presence of thyroid hormone for its interaction. Interacts with NUFIP1. Interacts (via HIT-type zinc finger) with the RUVBL1/RUVBL2 complex in the presence of ADP.

Its subcellular location is the cytoplasm. It localises to the nucleus. The polypeptide is Zinc finger HIT domain-containing protein 3 (ZNHIT3) (Pan troglodytes (Chimpanzee)).